Reading from the N-terminus, the 214-residue chain is HFQNYSSTKEGSLYSISLWGNRIPKGVNKDFVLSTTKSEVSFFSQNISISKGQGNTRNRTGSFSTSFGSKNLFTYPHETGNTMLFPLLILLLFTFFIGFIGIPFDNRTMDNGIVRLTILSKWLIPSINFTQESSNFSINSYEFITNAISSVSLAILGLFIAYIFYGSAYSFFQNLDLQNSFYKGSPKKNFFYQVKKKIYSWSYNRGYIDIFYSR.

Transmembrane regions (helical) follow at residues 84-104 and 152-172; these read LFPL…GIPF and SLAI…YSFF.

This sequence belongs to the complex I subunit 5 family. In terms of assembly, NDH is composed of at least 16 different subunits, 5 of which are encoded in the nucleus.

Its subcellular location is the plastid. The protein localises to the chloroplast thylakoid membrane. It catalyses the reaction a plastoquinone + NADH + (n+1) H(+)(in) = a plastoquinol + NAD(+) + n H(+)(out). The enzyme catalyses a plastoquinone + NADPH + (n+1) H(+)(in) = a plastoquinol + NADP(+) + n H(+)(out). Its function is as follows. NDH shuttles electrons from NAD(P)H:plastoquinone, via FMN and iron-sulfur (Fe-S) centers, to quinones in the photosynthetic chain and possibly in a chloroplast respiratory chain. The immediate electron acceptor for the enzyme in this species is believed to be plastoquinone. Couples the redox reaction to proton translocation, and thus conserves the redox energy in a proton gradient. The sequence is that of NAD(P)H-quinone oxidoreductase subunit 5, chloroplastic (ndhF) from Brachypodium sylvaticum (False brome).